The sequence spans 123 residues: Small ribosomal subunit protein uS12cz/uS12cy (123 aa).

The protein belongs to the universal ribosomal protein uS12 family. In terms of assembly, part of the 30S ribosomal subunit.

The protein resides in the plastid. The protein localises to the chloroplast. In terms of biological role, with S4 and S5 plays an important role in translational accuracy. Located at the interface of the 30S and 50S subunits. The protein is Small ribosomal subunit protein uS12cz/uS12cy (rps12-A) of Phaseolus vulgaris (Kidney bean).